The primary structure comprises 921 residues: MAAATAAAAPQQLSDEELFSQLRRYGLSPGPVTESTRPVYLKKLKKLREEEQQQQQQQQQQQHRAGGRGNKTRNSNNNNTATAMGGRPGSGDLAYLRSPAGLGRLSASAAESPVAGGSGGAAAVPAAGSKVLLGFSSDESDVEASPREQAGGGGGGGARRDRAALQYRGLRAPPAPPAAGEVTGGHPGERRKPHSWWGARRPAGPEPQPPAAGSDGAAEDADEELADGEDRDPEAEEPLWASRAVNGSRLLPYSSCREHYSDSEEEEEEGEEDGDVAPARQVLKDDSLARHRPRRSHSKPFSALTAKSGGSRQETSVQGGGALAMNDRAAAAGSLDRSRNLEEAAAEPGGGGGGGCGCDPVDSIPRYRAGAKKLAPLLSPPSPDGDSTLESPTGPLLKTNNHIGGGAFGVDSPGLYANSLPPGATAAAAPGTLRINHANHTGSNHTYLKTAYGKPKLCEPEEELLQQFKREEVSPTGSFSAHYLSMFLLTAACLFFLILGLTYLGMRGTGVPEDGGLIKNPFDETFGKIQESEKNLLMSTLYKLHDRLAQIAGDHECGSSSQRMLSVQEAAAYLKNLGPEYEDVFNTSLLWIFKNGKDVGIRCVGYGPEEDLTNITDVQFLQSTRPQMPFWCRFRRAFITVTHRLLLLCLGVVLVCVALRYMRYRWTKEEEETRQMYDMVVKIIDVLRSHNEACQETKDLQPYMPLPHVRDSLIQPQDRKKMKKVWDRAVDFLAANESRVRTETRRVGGADFLVWRWIQPSASCDKTLVIPSKVWQGQAFHLDRRNSPPNSLTPCLKIRNMFDPVMEIGDHWHLAIQEAILEKCSDNDGIVHIAVDRNSREGCVYVKCLSPEYAGKAFKALHGSWFDGKLVTVKYLRLDRYHHRFPQALTCNTPLKPANKHMNSLSHLRLRTGLANSQGSS.

The 45-residue stretch at 7 to 51 (AAAPQQLSDEELFSQLRRYGLSPGPVTESTRPVYLKKLKKLREEE) folds into the LEM domain. Phosphoserine is present on Ser-28. Disordered regions lie at residues 47–97 (LREE…AYLR), 136–357 (SSDE…GGCG), and 374–395 (LAPLLSPPSPDGDSTLESPTGP). Composition is skewed to low complexity over residues 53–62 (QQQQQQQQQQ) and 72–85 (TRNSNNNNTATAMG). Phosphoserine occurs at positions 136, 137, and 140. Over residues 217-237 (AAEDADEELADGEDRDPEAEE) the composition is skewed to acidic residues. Phosphoserine occurs at positions 261, 263, and 287. Residues 263 to 275 (SEEEEEEGEEDGD) are compositionally biased toward acidic residues. Over residues 308-317 (SGGSRQETSV) the composition is skewed to polar residues. The span at 348-357 (PGGGGGGGCG) shows a compositional bias: gly residues. At Ser-412 the chain carries Phosphoserine. Transmembrane regions (helical) follow at residues 486-506 (MFLLTAACLFFLILGLTYLGM) and 637-657 (AFITVTHRLLLLCLGVVLVCV). Residues 709–921 (VRDSLIQPQD…TGLANSQGSS (213 aa)) are interaction with SMAD1, SMAD2, SMAD3 and SMAD5. Residues 717–736 (QDRKKMKKVWDRAVDFLAAN) mediate DNA binding. Position 787 is a phosphoserine (Ser-787). Thr-893 bears the Phosphothreonine mark. Ser-921 carries the phosphoserine modification.

In terms of assembly, interacts with SMAD1, SMAD2, SMAD3 and SMAD5. Binds to both phosphorylated and unphosphorylated R-SMADS.

The protein resides in the nucleus inner membrane. Its function is as follows. Can function as a specific repressor of TGF-beta, activin, and BMP signaling through its interaction with the R-SMAD proteins. Antagonizes TGF-beta-induced cell proliferation arrest. This chain is Inner nuclear membrane protein Man1 (Lemd3), found in Mus musculus (Mouse).